The following is a 261-amino-acid chain: LIM and SH3 domain protein 1 (261 aa).

N-acetylmethionine is present on M1. Residues 5-56 form the LIM zinc-binding domain; it reads CARCGKIVYPTEKVNCLDKFWHKACFHCETCKMTLNMKNYKGYEKKPYCNAH. K42 is modified (N6-acetyllysine). Nebulin repeat units lie at residues 61 to 95 and 97 to 131; these read SFTM…KNKG and GFSV…KSRM. At T68 the chain carries Phosphothreonine. Residue K75 is modified to N6-methyllysine. Residue S99 is modified to Phosphoserine. Residue T104 is modified to Phosphothreonine. Residues 111–186 are disordered; the sequence is KKTQDQISNI…QPVAQSYGGY (76 aa). Residue K112 is modified to N6-succinyllysine. S118 is modified (phosphoserine). Residues 121-130 are compositionally biased toward basic and acidic residues; it reads KYHEEFEKSR. S134 and S146 each carry phosphoserine. The span at 167–183 shows a compositional bias: low complexity; it reads SAPVYQQPQQQPVAQSY. The 60-residue stretch at 202–261 folds into the SH3 domain; the sequence is GGGKRYRAVYDYSAADEDEVSFQDGDTIVNVQQIDDGWMYGTVERTGDTGMLPANYVEAI.

In terms of assembly, interacts with F-actin. Interacts with ANKRD54. Interacts with KBTBD10.

It localises to the cytoplasm. The protein localises to the cell cortex. It is found in the cytoskeleton. Its function is as follows. Plays an important role in the regulation of dynamic actin-based, cytoskeletal activities. Agonist-dependent changes in LASP1 phosphorylation may also serve to regulate actin-associated ion transport activities, not only in the parietal cell but also in certain other F-actin-rich secretory epithelial cell types. The sequence is that of LIM and SH3 domain protein 1 (LASP1) from Homo sapiens (Human).